The chain runs to 186 residues: Nicotinamide-nucleotide adenylyltransferase (186 aa).

It belongs to the archaeal NMN adenylyltransferase family.

Its subcellular location is the cytoplasm. The catalysed reaction is beta-nicotinamide D-ribonucleotide + ATP + H(+) = diphosphate + NAD(+). It functions in the pathway cofactor biosynthesis; NAD(+) biosynthesis; NAD(+) from nicotinamide D-ribonucleotide: step 1/1. This Pyrococcus abyssi (strain GE5 / Orsay) protein is Nicotinamide-nucleotide adenylyltransferase.